The following is a 627-amino-acid chain: Protein fem-1 homolog B (627 aa).

ANK repeat units follow at residues glutamine 45–glutamine 74, aspartate 87–histidine 116, threonine 120–isoleucine 149, and tyrosine 153–alanine 182. Zn(2+)-binding residues include histidine 185, cysteine 186, and histidine 218. ANK repeat units follow at residues cysteine 186–valine 215 and histidine 218–serine 248. A TPR repeat occupies serine 344–glycine 377. ANK repeat units lie at residues glutamate 483–alanine 527 and glutamate 531–methionine 568.

The protein belongs to the fem-1 family. Component of a CRL2 E3 ubiquitin-protein ligase complex, also named ECS (Elongin BC-CUL2/5-SOCS-box protein) complex, composed of CUL2, Elongin BC (ELOB and ELOC), RBX1 and substrate-specific adapter FEM1B. Homooligomer. Interacts with PPM1F and PHTF1. Interacts with the death domain of FAS/TNFRSF6 and TNFRSF1A. Interacts with CHEK1. Interacts with NKX3-1. As to expression, expressed in pancreatic islets, within both beta cells and non-beta cells (at protein level). Highly expressed in adult testis; expressed in all types of spermatogonia. Also expressed in the prostate of neonatal mice.

Its subcellular location is the cytoplasm. It is found in the nucleus. It participates in protein modification; protein ubiquitination. Its activity is regulated as follows. Activity of the CRL2(FEM1B) complex toward FNIP1 is inhibited by BEX family proteins (BEX1, BEX2, BEX3 and/or BEX4) in absence of reductive stress. Mechanistically, BEX proteins act as pseudosubstrate inhibitors that associate with FEM1B via zinc in absence of reductive stress, thereby preventing association between FEM1B and FNIP1. Its function is as follows. Substrate-recognition component of a Cul2-RING (CRL2) E3 ubiquitin-protein ligase complex of the DesCEND (destruction via C-end degrons) pathway, which recognizes a C-degron located at the extreme C terminus of target proteins, leading to their ubiquitination and degradation. The C-degron recognized by the DesCEND pathway is usually a motif of less than ten residues and can be present in full-length proteins, truncated proteins or proteolytically cleaved forms. The CRL2(FEM1B) complex specifically recognizes proteins ending with -Gly-Leu-Asp-Arg, such as CDK5R1, leading to their ubiquitination and degradation. Also acts as a regulator of the reductive stress response by mediating ubiquitination of reduced FNIP1: in response to reductive stress, the CRL2(FEM1B) complex specifically recognizes a conserved Cys degron in FNIP1 when this degron is reduced, leading to FNIP1 degradation and subsequent activation of mitochondria to recalibrate reactive oxygen species (ROS). Mechanistically, recognizes and binds reduced FNIP1 through two interface zinc ions, which act as a molecular glue that recruit reduced FNIP1 to FEM1B. Promotes ubiquitination of GLI1, suppressing GLI1 transcriptional activator activity. Promotes ubiquitination and degradation of ANKRD37. Promotes ubiquitination and degradation of SLBP. Involved in apoptosis by acting as a death receptor-associated protein that mediates apoptosis. Also involved in glucose homeostasis in pancreatic islet. May also act as an adapter/mediator in replication stress-induced signaling that leads to the activation of CHEK1. This Mus musculus (Mouse) protein is Protein fem-1 homolog B.